The primary structure comprises 544 residues: Protein angel homolog 2 (544 aa).

This sequence belongs to the CCR4/nocturin family.

The polypeptide is Protein angel homolog 2 (ANGEL2) (Homo sapiens (Human)).